The chain runs to 3183 residues: WD repeat- and FYVE domain-containing protein 4 (3183 aa).

Residues 1 to 15 (MEAEDLSKTEDRPED) show a composition bias toward basic and acidic residues. 4 disordered regions span residues 1–37 (MEAE…EGQS), 790–811 (AGQE…GKFK), 938–977 (KSLH…QALR), and 1828–1852 (KETT…HAAE). The segment covering 1832–1852 (SESSRNTSSPGASAEASHAAE) has biased composition (low complexity). One can recognise a BEACH-type PH domain in the interval 2383-2508 (LDGEKVSQKV…DRSKALKSFS (126 aa)). Positions 2525 to 2819 (NLRKHPGFDR…QIFTKPHPSR (295 aa)) constitute a BEACH domain. Positions 2812–2836 (FTKPHPSRNTTGKNPGPGKDASTPV) are disordered. 5 WD repeats span residues 2930–2969 (LAAW…GRPR), 2979–3018 (GHTQ…RVAC), 3021–3060 (VHRE…ASIT), 3070–3108 (TCCC…MPVP), and 3150–3183 (KASP…SADG).

Interacts with HSP90AB1. As to expression, highly expressed in immune tissues, especially B lymphocytes.

The protein localises to the early endosome. It is found in the endoplasmic reticulum. Plays a critical role in the regulation of cDC1-mediated cross-presentation of viral and tumor antigens in dendritic cells. Mechanistically, acts near the plasma membrane and interacts with endosomal membranes to promote endosomal-to-cytosol antigen trafficking. Also plays a role in B-cell survival through regulation of autophagy. The protein is WD repeat- and FYVE domain-containing protein 4 of Mus musculus (Mouse).